We begin with the raw amino-acid sequence, 814 residues long: MALGPFVLPFRGDQYSFGINFKSSPEEKLNFDLSCVAFDVKGQLHDTLHARKPTALDGALVKGFEKQALPEETVQVEGDDVIYMFPKKFERQVEVLLFVASAPSIPGKKHDLDSSSKLEFAVSYSDVGGQAFNQSFDLKPLAAQGGVSSIIVAVMYLQAEGGWTLRSVGDCHPFDSPGLIVPELKQTILNLRDHHGVQLDAADAIQAIDPAERVPVTRQFQDQSLDEASAGRAAEPAPVKKLRIDLSWTFWPPPPPTEEGEEPPEEPALEYNLVMYNKDGEEVQSISTGNREATGARAGRPEPEEDEEEEKEEEKEEPEEGEEGEEGEGGEPKEPPPPPPAPKVDPYEFKERDVIYLDVPDLPAEVRSMVLLVTNYDEENGFTRVRTVRCRLVDVSNGEAPLPGSKAAVAAAAAAAEQGLAAPPNPERVLADYGVLSKYEDDKATTQVALMKLYKEYADSAFNVFRGAGVDNVAAFIGQEPDTIINQLKAYLEATKKQKAAEAAAAAAAEESGEEITADPKPHVWRFRALGLNFGGDSLEAIEHDLKNLFAFDGDLAPGAARDSDTSRSSFPNGDTYFGSYADDVKHGPGLYAFATGAGYAGEYAGGKRHGRGVMVFPDGGTYVGEFVADKFEGQGQYRYPDGSVYTGSWAAGQKHGPGVYWDTARGCLRGEWKKGLLVGKGTYEQPALRFEGEFVRGMPAGTATYTLTGHRTLDMPCFAAQHIQAEEGPTLALPCAYGIPPGSGDEPQLDEEGQPIEDTDKPPLPAHPKYEGLTFTAEQLPGAAPDTVFPPEEGKPVPITAVPAFSVSTGLVA.

R243 is subject to Asymmetric dimethylarginine. The tract at residues 283–346 (VQSISTGNRE…PPPPAPKVDP (64 aa)) is disordered. Acidic residues predominate over residues 303-329 (PEEDEEEEKEEEKEEPEEGEEGEEGEG). R428 is subject to Asymmetric dimethylarginine. MORN repeat units lie at residues 577 to 597 (YFGS…FATG), 600 to 622 (YAGE…DGGT), 623 to 645 (YVGE…DGSV), 646 to 662 (YTGS…GVYW), 671 to 685 (GEWK…GTYE), and 691 to 707 (FEGE…ATYT). Residues 739–769 (GIPPGSGDEPQLDEEGQPIEDTDKPPLPAHP) are disordered. The span at 748 to 758 (PQLDEEGQPIE) shows a compositional bias: acidic residues.

Asymmetrically dimethylated at Arg-243 and Arg-428 during flagellum resorption. Probably methylated by PRMT1.

The protein resides in the cytoplasm. It is found in the cytoskeleton. The protein localises to the flagellum axoneme. Flagellar radial spokes contribute to the regulation of dynein arm activity and thus the pattern of flagellar bending. They consist of a thin stalk, which is attached to the a subfiber of the outer doublet microtubule, and a bulbous head, which is attached to the stalk and appears to interact with the projections from the central pair of microtubules. The polypeptide is Flagellar radial spoke protein 1 (Chlamydomonas reinhardtii (Chlamydomonas smithii)).